The chain runs to 61 residues: uncharacterized protein (61 aa).

The protein localises to the mitochondrion. This is an uncharacterized protein from Marchantia polymorpha (Common liverwort).